The sequence spans 489 residues: Protein translocase subunit SecY (489 aa).

The Cytoplasmic segment spans residues 1–20; it reads MGWKDAAEPVLSRMPAVARP. Residues 21-47 form a helical membrane-spanning segment; sequence EGHVPFRRKLGWTGGILVLYFFLTNVT. Residues 48 to 59 are Extracellular-facing; the sequence is LFGLDAATANDL. Residues 60–67 constitute an intramembrane region (helical); sequence FGQFRSIL. The discontinuously helical transmembrane segment at 60 to 88 threads the bilayer; that stretch reads FGQFRSILAGQQGSVLQLGIGPIVTASIV. The stretch at 68–79 is an intramembrane region; it reads AGQQGSVLQLGI. Positions 80–88 form an intramembrane region, helical; sequence GPIVTASIV. The Cytoplasmic segment spans residues 89 to 110; that stretch reads LQLLGGADLLGLDTDNNPRDQV. A helical transmembrane segment spans residues 111–135; that stretch reads LYQGLQKLLVGVMICLTGLPMVFAG. The Extracellular segment spans residues 136–153; sequence NFLPADQAVATSLGIGTV. Residues 154–178 form a helical membrane-spanning segment; the sequence is GVKGLIFAQIAVGGVLILFMDEIVS. The Cytoplasmic segment spans residues 179–184; sequence KWGVGS. A helical membrane pass occupies residues 185 to 203; sequence GVGLFIIAGVSQQLVGGLF. The Extracellular segment spans residues 204–244; it reads SWQGLGGTSGFFATWIGIITGAIELPASPTDLLSTVFLGQG. A helical membrane pass occupies residues 245-266; sequence QLLALITTLLIFGIVVYAESVR. Residues 267–291 are Cytoplasmic-facing; sequence VEIPLSHARVKGARGRFPVKLIYAS. The chain crosses the membrane as a helical span at residues 292–313; the sequence is VLPMILVRALQANIQFLGRFLN. The Extracellular segment spans residues 314–364; sequence SSWVGMPAWLGQYTSGQVTGGLLYYLAPIQSRSDWMWFLGLTSADPLDIAI. The chain crosses the membrane as a helical span at residues 365-384; the sequence is RVLIDLIFMIVGGAVFAIFW. At 385–427 the chain is on the cytoplasmic side; the sequence is VETTGMGPKSTAQQIQNSGMQIPGFRRNPQVIERVMERYIPQV. The helical transmembrane segment at 428 to 446 threads the bilayer; that stretch reads TVIGGALVGLLAVMANMLG. Topologically, residues 447–450 are extracellular; it reads TIGA. The chain crosses the membrane as a helical span at residues 451–465; that stretch reads VSGTGLLLTVSITYK. Residues 466 to 488 lie on the Cytoplasmic side of the membrane; that stretch reads LYEEIAEEQLMEMHPMMRNMFGS.

It belongs to the SecY/SEC61-alpha family. In terms of assembly, component of the Sec protein translocase complex. Heterotrimer consisting of alpha (SecY), beta (SecG) and gamma (SecE) subunits. The heterotrimers can form oligomers, although 1 heterotrimer is thought to be able to translocate proteins. Interacts with the ribosome. May interact with SecDF, and other proteins may be involved.

It is found in the cell membrane. The central subunit of the protein translocation channel SecYEG. Consists of two halves formed by TMs 1-5 and 6-10. These two domains form a lateral gate at the front which open onto the bilayer between TMs 2 and 7, and are clamped together by SecE at the back. The channel is closed by both a pore ring composed of hydrophobic SecY resides and a short helix (helix 2A) on the extracellular side of the membrane which forms a plug. The plug probably moves laterally to allow the channel to open. The ring and the pore may move independently. This chain is Protein translocase subunit SecY, found in Haloferax volcanii (strain ATCC 29605 / DSM 3757 / JCM 8879 / NBRC 14742 / NCIMB 2012 / VKM B-1768 / DS2) (Halobacterium volcanii).